Here is a 619-residue protein sequence, read N- to C-terminus: MGAAFLSSWPWDNLGAYKYVLYAPLVGKAVAGRAWERASPDHWLLLLLVLFGVRALTYQLWSSFSNMLFATRRRRIVRDGVDFGQIDREWDWDNFLILQVHMAAAAFYAFPSLRHLPLWDARGLAVAALLHVAATEPLFYAAHRAFHRGHLFSCYHLQHHSAKVPQPFTAGFATPLEQLVLGALMAVPLAAACAAGHGSVALAFAYVLGFDNLRAMGHCNVEVFPGGLFQSLPVLKYLIYTPTYHTIHHTKEDANFCLFMPLFDLIGGTLDAQSWEMQKKTSAGVDEVPEFVFLAHVVDVMQSLHVPFVLRTFASTPFSVQPFLLPMWPFAFLVMLMMWAWSKTFVISCYRLRGRLHQMWAVPRYGFHYFLPFAKDGINNQIELAILRADKMGAKVVSLAALNKNEALNGGGTLFVNKHPGLRVRVVHGNTLTAAVILNEIPQGTTEVFMTGATSKLGRAIALYLCRKKVRVMMMTLSTERFQKIQREATPEHQQYLVQVTKYRSAQHCKTWIVGKWLSPREQRWAPPGTHFHQFVVPPIIGFRRDCTYGKLAAMRLPKDVQGLGACEYSLERGVVHACHAGGVVHFLEGYTHHEVGAIDVDRIDVVWEAALRHGLRPV.

5 helical membrane passes run 44–64 (LLLL…WSSF), 93–113 (DNFL…FPSL), 123–143 (GLAV…YAAH), 190–210 (AAAC…VLGF), and 322–342 (PFLL…WAWS). The Fatty acid hydroxylase domain maps to 129-269 (LLHVAATEPL…MPLFDLIGGT (141 aa)).

This sequence belongs to the sterol desaturase family. In terms of assembly, homodimer.

It localises to the endoplasmic reticulum membrane. The catalysed reaction is a long-chain fatty aldehyde + 2 NADPH + O2 + H(+) = a long-chain alkane + formate + 2 NADP(+) + H2O. Functionally, aldehyde decarbonylase involved in the conversion of aldehydes to alkanes. Core component of a very-long-chain alkane synthesis complex. This chain is Very-long-chain aldehyde decarbonylase GL1-1, found in Oryza sativa subsp. indica (Rice).